We begin with the raw amino-acid sequence, 238 residues long: Zinc import ATP-binding protein ZnuC (238 aa).

An ABC transporter domain is found at 5–220 (VKLKNVCVNL…LEFISIFGLK (216 aa)). An ATP-binding site is contributed by 37–44 (GPNGAGKS).

The protein belongs to the ABC transporter superfamily. Zinc importer (TC 3.A.1.15.5) family. As to quaternary structure, the complex is composed of two ATP-binding proteins (ZnuC), two transmembrane proteins (ZnuB) and a solute-binding protein (ZnuA).

It is found in the cell inner membrane. It carries out the reaction Zn(2+)(out) + ATP(in) + H2O(in) = Zn(2+)(in) + ADP(in) + phosphate(in) + H(+)(in). Its function is as follows. Part of the ABC transporter complex ZnuABC involved in zinc import. Responsible for energy coupling to the transport system. The polypeptide is Zinc import ATP-binding protein ZnuC (Buchnera aphidicola subsp. Acyrthosiphon pisum (strain APS) (Acyrthosiphon pisum symbiotic bacterium)).